We begin with the raw amino-acid sequence, 385 residues long: Protein pelota homolog (385 aa).

Residue Lys-162 forms a Glycyl lysine isopeptide (Lys-Gly) (interchain with G-Cter in SUMO2) linkage. Phosphoserine is present on residues Ser-374, Ser-380, Ser-381, and Ser-382.

It belongs to the eukaryotic release factor 1 family. Pelota subfamily. As to quaternary structure, component of the Pelota-HBS1L complex, also named Dom34-Hbs1 complex, composed of PELO and HBS1L. Interacts with PINK1. Interacts with ABCE1. Interacts with CNOT4. Requires a divalent metal cation as cofactor. Ubiquitously expressed.

The protein resides in the cytoplasm. Its function is as follows. Component of the Pelota-HBS1L complex, a complex that recognizes stalled ribosomes and triggers the No-Go Decay (NGD) pathway. In the Pelota-HBS1L complex, PELO recognizes ribosomes stalled at the 3' end of an mRNA and engages stalled ribosomes by destabilizing mRNA in the mRNA channel. Following mRNA extraction from stalled ribosomes by the SKI complex, the Pelota-HBS1L complex promotes recruitment of ABCE1, which drives the disassembly of stalled ribosomes, followed by degradation of damaged mRNAs as part of the NGD pathway. As part of the PINK1-regulated signaling, upon mitochondrial damage is recruited to the ribosome/mRNA-ribonucleoprotein complex associated to mitochondrial outer membrane thereby enabling the recruitment of autophagy receptors and induction of mitophagy. This chain is Protein pelota homolog, found in Mus musculus (Mouse).